The following is a 1358-amino-acid chain: Mediator of RNA polymerase II transcription subunit 12 (1358 aa).

It belongs to the Mediator complex subunit 12 family. As to quaternary structure, component of the SRB8-11 complex, which itself associates with the Mediator complex.

The protein resides in the nucleus. Component of the SRB8-11 complex. The SRB8-11 complex is a regulatory module of the Mediator complex which is itself involved in regulation of basal and activated RNA polymerase II-dependent transcription. The SRB8-11 complex may be involved in the transcriptional repression of a subset of genes regulated by Mediator. It may inhibit the association of the Mediator complex with RNA polymerase II to form the holoenzyme complex. The protein is Mediator of RNA polymerase II transcription subunit 12 (SRB8) of Candida glabrata (strain ATCC 2001 / BCRC 20586 / JCM 3761 / NBRC 0622 / NRRL Y-65 / CBS 138) (Yeast).